The chain runs to 242 residues: Venom redulysin 2 (242 aa).

The signal sequence occupies residues 1–19 (MSKIWILLLLVGAVQFARG). The propeptide occupies 20-46 (FPALEEEQEDDVIDWPSFEYDLSDEER).

It belongs to the redulysin-like family. In terms of processing, contains 5 disulfide bonds. In terms of tissue distribution, expressed by the venom gland (posterior main gland) (at protein level).

It is found in the secreted. Its function is as follows. Highly abundant protein that may be responsible for the observed disruption of sensory neuron membranes, since it is homologous to proteins such as trialysin, which forms pores in lipid bilayers. Probable insecticidal toxin. In Platymeris rhadamanthus (Red spot assassin bug), this protein is Venom redulysin 2.